The sequence spans 163 residues: Glutathione peroxidase 1 (163 aa).

The active site involves Cys-36.

It belongs to the glutathione peroxidase family.

The protein resides in the cytoplasm. The catalysed reaction is 2 glutathione + H2O2 = glutathione disulfide + 2 H2O. May constitute a glutathione peroxidase-like protective system against oxidative stresses. The chain is Glutathione peroxidase 1 (gpx-1) from Caenorhabditis elegans.